We begin with the raw amino-acid sequence, 89 residues long: MAKASEHFFYVLKCSDNSYYGGYTTDVIRREAEHNAGIRCKYTKTRRPVKVIHFEKFETRSEATKAEAAFKKLSRKNKDAYLIQREESE.

Residues 5-80 (SEHFFYVLKC…KKLSRKNKDA (76 aa)) form the GIY-YIG domain.

This sequence belongs to the UPF0213 family.

The chain is UPF0213 protein LMOf2365_0181 from Listeria monocytogenes serotype 4b (strain F2365).